The primary structure comprises 95 residues: Pyruvate synthase subunit PorD (95 aa).

2 consecutive 4Fe-4S ferredoxin-type domains span residues 34-63 (FRPV…PREN) and 64-93 (GFFE…MILE). The [4Fe-4S] cluster site is built by cysteine 43, cysteine 46, cysteine 49, cysteine 53, cysteine 73, cysteine 76, cysteine 79, and cysteine 83.

In terms of assembly, heterotetramer of one alpha, one beta, one delta and one gamma chain. [4Fe-4S] cluster serves as cofactor.

In Methanosarcina barkeri (strain Fusaro / DSM 804), this protein is Pyruvate synthase subunit PorD (porD).